Reading from the N-terminus, the 439-residue chain is Apolipoprotein N-acyltransferase (439 aa).

6 helical membrane passes run 13–33 (LLAG…FLVF), 47–67 (LFSF…IPLI), 75–95 (FIAY…QFGL), 97–117 (YLLW…YTLV), 149–169 (NAGT…FPLF), and 175–195 (IFSL…ETSY). Positions 207 to 439 (IQPFVPQDVK…GSRGILLFSF (233 aa)) constitute a CN hydrolase domain. E248 acts as the Proton acceptor in catalysis. Residue K305 is part of the active site. Residue C355 is the Nucleophile of the active site.

This sequence belongs to the CN hydrolase family. Apolipoprotein N-acyltransferase subfamily.

It is found in the cell inner membrane. The catalysed reaction is N-terminal S-1,2-diacyl-sn-glyceryl-L-cysteinyl-[lipoprotein] + a glycerophospholipid = N-acyl-S-1,2-diacyl-sn-glyceryl-L-cysteinyl-[lipoprotein] + a 2-acyl-sn-glycero-3-phospholipid + H(+). The protein operates within protein modification; lipoprotein biosynthesis (N-acyl transfer). Catalyzes the phospholipid dependent N-acylation of the N-terminal cysteine of apolipoprotein, the last step in lipoprotein maturation. The sequence is that of Apolipoprotein N-acyltransferase from Aquifex aeolicus (strain VF5).